We begin with the raw amino-acid sequence, 488 residues long: uncharacterized protein (488 aa).

The next 12 membrane-spanning stretches (helical) occupy residues 2-22 (FGLP…VFLV), 27-47 (VHAF…GGMS), 59-79 (FGGT…MGSV), 106-126 (LAIT…FVIL), 176-196 (IGAM…GIVL), 241-261 (LLPI…HLFV), 275-295 (IVSF…ISVY), 314-334 (VKTA…GAVL), 347-367 (IANL…LVRF), 368-388 (IQGS…PILA), 438-458 (VPTT…NLIF), and 461-481 (DGSV…LFYI).

This sequence belongs to the GntP permease family.

It is found in the cell inner membrane. This is an uncharacterized protein from Haemophilus influenzae (strain ATCC 51907 / DSM 11121 / KW20 / Rd).